The following is an 80-amino-acid chain: Small ribosomal subunit protein uS17 (80 aa).

The protein belongs to the universal ribosomal protein uS17 family. As to quaternary structure, part of the 30S ribosomal subunit.

One of the primary rRNA binding proteins, it binds specifically to the 5'-end of 16S ribosomal RNA. This chain is Small ribosomal subunit protein uS17, found in Beijerinckia indica subsp. indica (strain ATCC 9039 / DSM 1715 / NCIMB 8712).